Here is a 556-residue protein sequence, read N- to C-terminus: Formate--tetrahydrofolate ligase (556 aa).

Position 65–72 (threonine 65–threonine 72) interacts with ATP.

It belongs to the formate--tetrahydrofolate ligase family.

The enzyme catalyses (6S)-5,6,7,8-tetrahydrofolate + formate + ATP = (6R)-10-formyltetrahydrofolate + ADP + phosphate. Its pathway is one-carbon metabolism; tetrahydrofolate interconversion. This chain is Formate--tetrahydrofolate ligase, found in Proteus mirabilis (strain HI4320).